The primary structure comprises 182 residues: Ribosome-recycling factor (182 aa).

Residues valine 136–glutamate 160 form a disordered region.

It belongs to the RRF family.

The protein resides in the cytoplasm. Its function is as follows. Responsible for the release of ribosomes from messenger RNA at the termination of protein biosynthesis. May increase the efficiency of translation by recycling ribosomes from one round of translation to another. The sequence is that of Ribosome-recycling factor from Prochlorococcus marinus (strain NATL2A).